The sequence spans 325 residues: 5-dehydro-2-deoxygluconokinase (325 aa).

It belongs to the carbohydrate kinase PfkB family.

It carries out the reaction 5-dehydro-2-deoxy-D-gluconate + ATP = 6-phospho-5-dehydro-2-deoxy-D-gluconate + ADP + H(+). It functions in the pathway polyol metabolism; myo-inositol degradation into acetyl-CoA; acetyl-CoA from myo-inositol: step 5/7. Catalyzes the phosphorylation of 5-dehydro-2-deoxy-D-gluconate (2-deoxy-5-keto-D-gluconate or DKG) to 6-phospho-5-dehydro-2-deoxy-D-gluconate (DKGP). The protein is 5-dehydro-2-deoxygluconokinase of Listeria monocytogenes serotype 4b (strain CLIP80459).